The following is a 296-amino-acid chain: Glycine--tRNA ligase alpha subunit (296 aa).

This sequence belongs to the class-II aminoacyl-tRNA synthetase family. As to quaternary structure, tetramer of two alpha and two beta subunits.

The protein resides in the cytoplasm. It carries out the reaction tRNA(Gly) + glycine + ATP = glycyl-tRNA(Gly) + AMP + diphosphate. The protein is Glycine--tRNA ligase alpha subunit of Listeria innocua serovar 6a (strain ATCC BAA-680 / CLIP 11262).